Here is a 54-residue protein sequence, read N- to C-terminus: Ovomucoid (54 aa).

The Kazal-like domain occupies 4–54 (VDCSDYPKPVCSPENMPVCGSDSKTYSNKCDFCNAVADSNGTLTLSHFGKC). 3 cysteine pairs are disulfide-bonded: cysteine 6-cysteine 36, cysteine 14-cysteine 33, and cysteine 22-cysteine 54. N-linked (GlcNAc...) asparagine glycosylation occurs at asparagine 43.

Its subcellular location is the secreted. This Nycticorax nycticorax (Black-crowned night-heron) protein is Ovomucoid.